Reading from the N-terminus, the 551-residue chain is Small ribosomal subunit protein bS1 (551 aa).

S1 motif domains follow at residues 21-83 (GALV…LSRE), 101-167 (GEMV…VSRR), 188-256 (GQEI…LGMK), 273-343 (NSRV…LGIK), 360-430 (DEKI…LGIK), and 447-516 (DAVI…VSHK).

The protein belongs to the bacterial ribosomal protein bS1 family.

Binds mRNA; thus facilitating recognition of the initiation point. It is needed to translate mRNA with a short Shine-Dalgarno (SD) purine-rich sequence. The protein is Small ribosomal subunit protein bS1 (rpsA) of Coxiella burnetii (strain RSA 493 / Nine Mile phase I).